A 245-amino-acid polypeptide reads, in one-letter code: Phosphoadenosine 5'-phosphosulfate reductase (245 aa).

Cysteine 239 acts as the Nucleophile; cysteine thiosulfonate intermediate in catalysis.

Belongs to the PAPS reductase family. CysH subfamily.

Its subcellular location is the cytoplasm. It catalyses the reaction [thioredoxin]-disulfide + sulfite + adenosine 3',5'-bisphosphate + 2 H(+) = [thioredoxin]-dithiol + 3'-phosphoadenylyl sulfate. It functions in the pathway sulfur metabolism; hydrogen sulfide biosynthesis; sulfite from sulfate: step 3/3. Functionally, catalyzes the formation of sulfite from phosphoadenosine 5'-phosphosulfate (PAPS) using thioredoxin as an electron donor. This chain is Phosphoadenosine 5'-phosphosulfate reductase, found in Alkalilimnicola ehrlichii (strain ATCC BAA-1101 / DSM 17681 / MLHE-1).